The primary structure comprises 359 residues: Molybdenum import ATP-binding protein ModC (359 aa).

One can recognise an ABC transporter domain in the interval 1–233 (MSGLTVSIRG…IDAESEGGGV (233 aa)). 32–39 (GHSGAGKT) contacts ATP. Residues 289-355 (AISIRNLLPV…VKAVSVDRAA (67 aa)) form the Mop domain.

The protein belongs to the ABC transporter superfamily. Molybdate importer (TC 3.A.1.8) family. In terms of assembly, the complex is composed of two ATP-binding proteins (ModC), two transmembrane proteins (ModB) and a solute-binding protein (ModA).

Its subcellular location is the cell inner membrane. It carries out the reaction molybdate(out) + ATP + H2O = molybdate(in) + ADP + phosphate + H(+). Its function is as follows. Part of the ABC transporter complex ModABC involved in molybdenum import. Responsible for energy coupling to the transport system. This is Molybdenum import ATP-binding protein ModC from Brucella suis biovar 1 (strain 1330).